A 173-amino-acid chain; its full sequence is Regulator of ribonuclease activity A (173 aa).

Belongs to the RraA family. As to quaternary structure, homotrimer. Binds to both RNA-binding sites in the C-terminal region of Rne and to RhlB.

It is found in the cytoplasm. Globally modulates RNA abundance by binding to RNase E (Rne) and regulating its endonucleolytic activity. Can modulate Rne action in a substrate-dependent manner by altering the composition of the degradosome. Modulates RNA-binding and helicase activities of the degradosome. This Vibrio vulnificus (strain CMCP6) protein is Regulator of ribonuclease activity A.